A 406-amino-acid polypeptide reads, in one-letter code: Succinylornithine transaminase (406 aa).

Lys252 is modified (N6-(pyridoxal phosphate)lysine).

It belongs to the class-III pyridoxal-phosphate-dependent aminotransferase family. AstC subfamily. Requires pyridoxal 5'-phosphate as cofactor.

The enzyme catalyses N(2)-succinyl-L-ornithine + 2-oxoglutarate = N-succinyl-L-glutamate 5-semialdehyde + L-glutamate. Its pathway is amino-acid degradation; L-arginine degradation via AST pathway; L-glutamate and succinate from L-arginine: step 3/5. Catalyzes the transamination of N(2)-succinylornithine and alpha-ketoglutarate into N(2)-succinylglutamate semialdehyde and glutamate. Can also act as an acetylornithine aminotransferase. The protein is Succinylornithine transaminase of Escherichia coli (strain 55989 / EAEC).